Consider the following 197-residue polypeptide: Holliday junction branch migration complex subunit RuvA (197 aa).

The segment at M1 to R62 is domain I. A domain II region spans residues S63–E141. Residues E141–A145 are flexible linker. A domain III region spans residues Q146–R197.

The protein belongs to the RuvA family. Homotetramer. Forms an RuvA(8)-RuvB(12)-Holliday junction (HJ) complex. HJ DNA is sandwiched between 2 RuvA tetramers; dsDNA enters through RuvA and exits via RuvB. An RuvB hexamer assembles on each DNA strand where it exits the tetramer. Each RuvB hexamer is contacted by two RuvA subunits (via domain III) on 2 adjacent RuvB subunits; this complex drives branch migration. In the full resolvosome a probable DNA-RuvA(4)-RuvB(12)-RuvC(2) complex forms which resolves the HJ.

It is found in the cytoplasm. Functionally, the RuvA-RuvB-RuvC complex processes Holliday junction (HJ) DNA during genetic recombination and DNA repair, while the RuvA-RuvB complex plays an important role in the rescue of blocked DNA replication forks via replication fork reversal (RFR). RuvA specifically binds to HJ cruciform DNA, conferring on it an open structure. The RuvB hexamer acts as an ATP-dependent pump, pulling dsDNA into and through the RuvAB complex. HJ branch migration allows RuvC to scan DNA until it finds its consensus sequence, where it cleaves and resolves the cruciform DNA. The protein is Holliday junction branch migration complex subunit RuvA of Exiguobacterium sibiricum (strain DSM 17290 / CCUG 55495 / CIP 109462 / JCM 13490 / 255-15).